Consider the following 918-residue polypeptide: Chaperone protein ClpC4, chloroplastic (918 aa).

The tract at residues 266–515 (LMEYGTNLTK…RLRNAQCKPS (250 aa)) is i. ATP contacts are provided by residues 311–318 (GEPGVGKT) and 653–660 (GPTGVGKS). The tract at residues 579-774 (VTEDDVRHAI…LIVMTTNIGS (196 aa)) is II.

This sequence belongs to the ClpA/ClpB family. ClpC subfamily.

It localises to the plastid. It is found in the chloroplast. Its function is as follows. Molecular chaperone that may interact with a ClpP-like protease involved in degradation of denatured proteins in the chloroplast. This is Chaperone protein ClpC4, chloroplastic (CPLC4) from Oryza sativa subsp. japonica (Rice).